We begin with the raw amino-acid sequence, 54 residues long: Ferredoxin (54 aa).

4Fe-4S ferredoxin-type domains are found at residues 2–28 (HVISDECVKCGACASTCPTGAIEEGET) and 29–54 (KYVVTDSCIDCGACEAVCPTGAISAE). Cys-8, Cys-11, Cys-14, Cys-18, Cys-36, Cys-39, Cys-42, and Cys-46 together coordinate [4Fe-4S] cluster.

Requires [4Fe-4S] cluster as cofactor.

Its function is as follows. Ferredoxins are iron-sulfur proteins that transfer electrons in a wide variety of metabolic reactions. The polypeptide is Ferredoxin (Megasphaera elsdenii).